A 156-amino-acid polypeptide reads, in one-letter code: Small ribosomal subunit protein bS6 (156 aa).

Residues 98–156 (GHDFRDQRSHHGQAGEFRKREPQQKSKEQSEFSKEKKSFSKSVTKKTVVSKPKETKEEK) are disordered. Residues 113–135 (EFRKREPQQKSKEQSEFSKEKKS) are compositionally biased toward basic and acidic residues. The span at 137–147 (SKSVTKKTVVS) shows a compositional bias: low complexity.

It belongs to the bacterial ribosomal protein bS6 family.

Its function is as follows. Binds together with bS18 to 16S ribosomal RNA. This is Small ribosomal subunit protein bS6 from Mycoplasmopsis synoviae (strain 53) (Mycoplasma synoviae).